The primary structure comprises 339 residues: Aspartate carbamoyltransferase catalytic subunit (339 aa).

Residues R59 and T60 each contribute to the carbamoyl phosphate site. K87 contacts L-aspartate. Positions 109, 142, and 145 each coordinate carbamoyl phosphate. L-aspartate contacts are provided by R182 and R253. Positions 294 and 295 each coordinate carbamoyl phosphate.

Belongs to the aspartate/ornithine carbamoyltransferase superfamily. ATCase family. Heterododecamer (2C3:3R2) of six catalytic PyrB chains organized as two trimers (C3), and six regulatory PyrI chains organized as three dimers (R2).

The enzyme catalyses carbamoyl phosphate + L-aspartate = N-carbamoyl-L-aspartate + phosphate + H(+). The protein operates within pyrimidine metabolism; UMP biosynthesis via de novo pathway; (S)-dihydroorotate from bicarbonate: step 2/3. Its function is as follows. Catalyzes the condensation of carbamoyl phosphate and aspartate to form carbamoyl aspartate and inorganic phosphate, the committed step in the de novo pyrimidine nucleotide biosynthesis pathway. This chain is Aspartate carbamoyltransferase catalytic subunit, found in Prochlorococcus marinus (strain NATL2A).